Reading from the N-terminus, the 691-residue chain is 1-butanol dehydrogenase (cytochrome c) (691 aa).

Positions 1 to 38 are cleaved as a signal peptide; that stretch reads MLTTTFARKREESVPLRKGIQRALLGLSCLVLSTTSFA. Glutamate 84 provides a ligand contact to pyrroloquinoline quinone. A disulfide bond links cysteine 130 and cysteine 131. Pyrroloquinoline quinone contacts are provided by residues arginine 136, threonine 181, and 197-198; that span reads GA. Glutamate 199 and aspartate 322 together coordinate Ca(2+). Aspartate 322 serves as the catalytic Proton acceptor. Residues lysine 349, 408 to 409, and valine 558 each bind pyrroloquinoline quinone; that span reads NW. In terms of domain architecture, Cytochrome c spans 605–684; that stretch reads DDVAEGTGLY…KIKAFILGTA (80 aa). Heme c contacts are provided by cysteine 618, cysteine 621, histidine 622, and methionine 661.

This sequence belongs to the bacterial PQQ dehydrogenase family. In terms of assembly, monomer. Requires pyrroloquinoline quinone as cofactor. The cofactor is Ca(2+). Heme c serves as cofactor.

Its subcellular location is the periplasm. It carries out the reaction butan-1-ol + 2 Fe(III)-[cytochrome c] = butanal + 2 Fe(II)-[cytochrome c] + 2 H(+). Dehydrogenase activity is increased by ammonium ions. Functionally, involved in the metabolism of butane. Could be important in the detoxification of 1-butanol. Catalyzes the oxidation of 1-butanol to butyraldehyde. Also able to use 1-propanol, 2-pentanol, propionaldehyde and butyraldehyde as substrates. The protein is 1-butanol dehydrogenase (cytochrome c) of Thauera butanivorans (strain ATCC 43655 / DSM 2080 / JCM 20651 / CCUG 51053 / NBRC 103042 / IAM 12574 / Bu B1211) (Pseudomonas butanovora).